We begin with the raw amino-acid sequence, 409 residues long: Gamma-glutamyl phosphate reductase (409 aa).

Belongs to the gamma-glutamyl phosphate reductase family.

The protein resides in the cytoplasm. It catalyses the reaction L-glutamate 5-semialdehyde + phosphate + NADP(+) = L-glutamyl 5-phosphate + NADPH + H(+). Its pathway is amino-acid biosynthesis; L-proline biosynthesis; L-glutamate 5-semialdehyde from L-glutamate: step 2/2. Its function is as follows. Catalyzes the NADPH-dependent reduction of L-glutamate 5-phosphate into L-glutamate 5-semialdehyde and phosphate. The product spontaneously undergoes cyclization to form 1-pyrroline-5-carboxylate. This chain is Gamma-glutamyl phosphate reductase, found in Mycobacterium leprae (strain TN).